A 355-amino-acid chain; its full sequence is Probable butyrate kinase (355 aa).

Belongs to the acetokinase family.

The protein localises to the cytoplasm. The catalysed reaction is butanoate + ATP = butanoyl phosphate + ADP. In Listeria monocytogenes serotype 4b (strain CLIP80459), this protein is Probable butyrate kinase.